An 862-amino-acid polypeptide reads, in one-letter code: Leucine--tRNA ligase (862 aa).

Residues 51–61 carry the 'HIGH' region motif; that stretch reads PYPSGSLHMGH. The 'KMSKS' region motif lies at 624-628; the sequence is KMSKS. Lys-627 contributes to the ATP binding site.

It belongs to the class-I aminoacyl-tRNA synthetase family.

Its subcellular location is the cytoplasm. It carries out the reaction tRNA(Leu) + L-leucine + ATP = L-leucyl-tRNA(Leu) + AMP + diphosphate. The polypeptide is Leucine--tRNA ligase (Prochlorococcus marinus (strain NATL1A)).